Here is a 590-residue protein sequence, read N- to C-terminus: Aspartate--tRNA ligase (590 aa).

Glu-180 contributes to the L-aspartate binding site. The segment at Gln-204–Lys-207 is aspartate. Arg-226 serves as a coordination point for L-aspartate. Residues Arg-226–Glu-228 and Gln-235 each bind ATP. Position 454 (His-454) interacts with L-aspartate. Glu-488 is an ATP binding site. Arg-495 lines the L-aspartate pocket. Residue Gly-540–Arg-543 participates in ATP binding.

This sequence belongs to the class-II aminoacyl-tRNA synthetase family. Type 1 subfamily. In terms of assembly, homodimer.

It localises to the cytoplasm. It carries out the reaction tRNA(Asp) + L-aspartate + ATP = L-aspartyl-tRNA(Asp) + AMP + diphosphate. Catalyzes the attachment of L-aspartate to tRNA(Asp) in a two-step reaction: L-aspartate is first activated by ATP to form Asp-AMP and then transferred to the acceptor end of tRNA(Asp). The protein is Aspartate--tRNA ligase of Clostridium kluyveri (strain NBRC 12016).